Consider the following 712-residue polypeptide: Lactoperoxidase (712 aa).

A signal peptide spans 1 to 21; that stretch reads MLVCLHLQVFLASVALFEVAA. A propeptide spanning residues 22–117 is cleaved from the precursor; sequence SDTIAQAAST…TDPSLDLTAL (96 aa). The N-linked (GlcNAc...) (complex) asparagine; alternate glycan is linked to Asn106. Asn106 carries N-linked (GlcNAc...) (hybrid) asparagine; alternate glycosylation. 4 disulfides stabilise this stretch: Cys123–Cys284, Cys132–Cys145, Cys246–Cys256, and Cys250–Cys274. Asn212 is a glycosylation site (N-linked (GlcNAc...) (complex) asparagine; alternate). An N-linked (GlcNAc...) (hybrid) asparagine; alternate glycan is attached at Asn212. Asp225 contributes to the heme b binding site. His226 acts as the Proton acceptor in catalysis. Residue Asp227 participates in Ca(2+) binding. The Ca(2+) site is built by Thr301, Phe303, Asp305, and Ser307. Phosphoserine is present on Ser315. A glycan (N-linked (GlcNAc...) (high mannose) asparagine) is linked at Asn322. Cys354 and Cys365 are oxidised to a cystine. Asn358 carries an N-linked (GlcNAc...) asparagine glycan. Glu375 serves as a coordination point for heme b. A glycan (N-linked (GlcNAc...) (complex) asparagine; alternate) is linked at Asn449. A glycan (N-linked (GlcNAc...) (hybrid) asparagine; alternate) is linked at Asn449. A glycan (N-linked (GlcNAc...) (high mannose) asparagine; alternate) is linked at Asn449. Heme b is bound at residue His468. 3'-nitrotyrosine is present on Tyr482. 2 cysteine pairs are disulfide-bonded: Cys573-Cys630 and Cys671-Cys696.

This sequence belongs to the peroxidase family. XPO subfamily. Ca(2+) is required as a cofactor. It depends on heme b as a cofactor. Mammary gland; milk.

The protein resides in the secreted. Its subcellular location is the cytoplasm. It carries out the reaction 2 a phenolic donor + H2O2 = 2 a phenolic radical donor + 2 H2O. The catalysed reaction is thiocyanate + H2O2 + H(+) = hypothiocyanous acid + H2O. It catalyses the reaction iodide + H2O2 = hypoiodite + H2O. With respect to regulation, inhibited by small molecule methimazole (MMZ). Heme-containing oxidoreductase which catalyzes the conversion of thiocyanate (SCN(-)) into antimicrobial agent hypothiocyanous acid (OSCN(-)) in the presence of hydrogen peroxide (H2O2). Also involved in the conversion of iodide (I(-)) into hypoiodite (IO(-)) in the presence of H2O2. Responsible for the inactivation of a wide range of micro-organisms and hence, important component of defense mechanism. Shows antibacterial properties against several Gram-positive bacteria including some Staphylococcus species and Gram-negative bacteria including E.coli, P.aeruginosa and some Salmonella species. Inhibits the growth of several fungi including A.niger, Trichoderma species, C.cassicola, P.meadii and C.salmonicolor. Does not have anti-fungal activity towards C.albicans and Pythium species. May protect the udder from infection and may promote growth in newborns. May be implicated in airway host defense against infection. May contribute to maintaining an appropriate H2O2 cellular level, therefore protecting cells from H2O2-caused injuries and inflammation. In Capra hircus (Goat), this protein is Lactoperoxidase (LPO).